Consider the following 188-residue polypeptide: uncharacterized protein (188 aa).

Residues 121–142 (ADTLSRKNKRSSDQKRNGQHFE) are disordered. Over residues 130–142 (RSSDQKRNGQHFE) the composition is skewed to basic and acidic residues.

Belongs to the chlamydial CPn_0422/CT_273/TC_0545 family.

This is an uncharacterized protein from Chlamydia trachomatis serovar D (strain ATCC VR-885 / DSM 19411 / UW-3/Cx).